The chain runs to 541 residues: Protein wntless homolog (541 aa).

Positions 1-42 (MAGAIIENMSTRKLCIVGGILLVFQVIAFLVGGLIAPSPTTA) are cleaved as a signal peptide. Residues 43–232 (VPYMSVKCID…GIHQNGGFTK (190 aa)) lie on the Lumenal side of the membrane. Residues 233-253 (VWFAMKTFLTPSILIIMVWYW) traverse the membrane as a helical segment. Over 254 to 268 (RRITLMTRAPVLLEK) the chain is Cytoplasmic. Residues 269 to 289 (VIFALGISMTFINIPVEWFSI) traverse the membrane as a helical segment. At 290–303 (GFDWTWMLLFGDIR) the chain is on the lumenal side. The helical transmembrane segment at 304–324 (QGIFYAMLLSFWIIFCGEHMM) threads the bilayer. Residues 325 to 331 (DQNERNR) are Cytoplasmic-facing. A helical membrane pass occupies residues 332–352 (LSGYWKQVGPIAVGSFCLFIF). Over 353–380 (DMCERGVQLKNPFYSIWTTEVGTELAMA) the chain is Lumenal. Residues 381 to 401 (FIIVAGICLCLYFLFLCFMVF) traverse the membrane as a helical segment. The Cytoplasmic segment spans residues 402–431 (QVFRNISGKQSSLPAMSKARRLHYEGLIFR). Residues 432 to 452 (FKFLMLITLACAAMTVIFFIV) form a helical membrane-spanning segment. The Lumenal portion of the chain corresponds to 453–471 (SQVTEGHWKWGDITIQVNS). Residues 472-492 (AFFTGIYGMWNLYVFALMFLY) form a helical membrane-spanning segment. The Cytoplasmic portion of the chain corresponds to 493–541 (APSHKNYGEDQSNGDLGVSSGEELQLTTTITHVDGPTEVYKLARKEAQE).

The protein belongs to the wntless family.

Its subcellular location is the golgi apparatus membrane. It is found in the cytoplasmic vesicle membrane. May play an essential role in Wnt signaling pathway. May be required for Wnt-dependent patterning processes. This chain is Protein wntless homolog (WLS), found in Gallus gallus (Chicken).